The primary structure comprises 499 residues: Endoglucanase (499 aa).

The first 29 residues, 1–29 (MKRSISIFITCLLITLLTMGGMIASPASA), serve as a signal peptide directing secretion. Substrate is bound by residues His65, 69 to 70 (WY), Tyr96, and His131. Residue Glu169 is the Proton donor of the active site. Tyr231 is a substrate binding site. The active-site Nucleophile is the Glu257. Substrate is bound by residues 263 to 264 (AS), Trp291, and 296 to 298 (KQE). The region spanning 350–499 (QENGISVQYR…GKLIWGTEPN (150 aa)) is the CBM3 domain.

Belongs to the glycosyl hydrolase 5 (cellulase A) family.

It carries out the reaction Endohydrolysis of (1-&gt;4)-beta-D-glucosidic linkages in cellulose, lichenin and cereal beta-D-glucans.. The chain is Endoglucanase (eglS) from Bacillus subtilis (strain 168).